Here is a 186-residue protein sequence, read N- to C-terminus: TATA-box-binding protein F (186 aa).

Repeat copies occupy residues isoleucine 10 to leucine 86 and valine 101 to leucine 179.

The protein belongs to the TBP family.

In terms of biological role, general factor that plays a role in the activation of archaeal genes transcribed by RNA polymerase. Binds specifically to the TATA box promoter element which lies close to the position of transcription initiation. This Halobacterium salinarum (strain ATCC 700922 / JCM 11081 / NRC-1) (Halobacterium halobium) protein is TATA-box-binding protein F (tbpF).